The following is a 164-amino-acid chain: Heat shock protein beta-6 (164 aa).

Residues 1-72 (MEIPVSVQPS…PTAQVSTDPG (72 aa)) are involved in stabilization of the HSPB1:HSBP6 heterodimer. Phosphoserine is present on Ser16. Residues 56–163 (RAPSVALPTA…PLQSPPGAAA (108 aa)) enclose the sHSP domain. Position 66 is a deamidated glutamine (Gln66). Ser157 is modified (phosphoserine).

Belongs to the small heat shock protein (HSP20) family. Homodimer. Small heat shock proteins form high molecular mass oligomers containing variable number of monomers; these oligomers display a very flexible quaternary structure easily exchanging their subunits. Heterooligomer with HSPB1; formed through oligomerization of HSPB1:HSBP6 dimers; subunit exchange leads to formation of at least two different heterooligomeric complexes, differing in variable quantities of HSPB1 and HSPB6 homodimers in addition to HSPB1:HSPB6 heterodimers. Heterooligomer with CRYAB; large heterooligomers consist of CRYAB homodimers and HSPB5:HSPB6 heterodimers but lacking HSPB6 homodimers. Interacts with BAG3. Interacts (phosphorylated) with YWHAZ. Interacts with PDE4A and PDE4D; required for maintenance of the non-phosphorylated state of HSPB6 under basal conditions. Interacts with KDR. Interacts with PRKD1. Phosphorylated at Ser-16 by PKA and probably PKD1K; required to protect cardiomyocytes from apoptosis.

The protein localises to the cytoplasm. It is found in the nucleus. Its subcellular location is the secreted. In terms of biological role, small heat shock protein which functions as a molecular chaperone probably maintaining denatured proteins in a folding-competent state. Seems to have versatile functions in various biological processes. Plays a role in regulating muscle function such as smooth muscle vasorelaxation and cardiac myocyte contractility. May regulate myocardial angiogenesis implicating KDR. Overexpression mediates cardioprotection and angiogenesis after induced damage. Stabilizes monomeric YWHAZ thereby supporting YWHAZ chaperone-like activity. The protein is Heat shock protein beta-6 (HSPB6) of Bos taurus (Bovine).